A 453-amino-acid polypeptide reads, in one-letter code: DNA repair protein RadA (453 aa).

A C4-type zinc finger spans residues 10 to 27; that stretch reads CTECGATFPKWAGQCADC. 96–103 serves as a coordination point for ATP; sequence GDPGIGKS. The RadA KNRFG motif signature appears at 252 to 256; sequence KNRFG. A lon-protease-like region spans residues 351–453; it reads DVFLNVVGGV…LEQALDALFE (103 aa).

It belongs to the RecA family. RadA subfamily.

DNA-dependent ATPase involved in processing of recombination intermediates, plays a role in repairing DNA breaks. Stimulates the branch migration of RecA-mediated strand transfer reactions, allowing the 3' invading strand to extend heteroduplex DNA faster. Binds ssDNA in the presence of ADP but not other nucleotides, has ATPase activity that is stimulated by ssDNA and various branched DNA structures, but inhibited by SSB. Does not have RecA's homology-searching function. The polypeptide is DNA repair protein RadA (Pseudomonas aeruginosa (strain ATCC 15692 / DSM 22644 / CIP 104116 / JCM 14847 / LMG 12228 / 1C / PRS 101 / PAO1)).